We begin with the raw amino-acid sequence, 173 residues long: Thiol-disulfide oxidoreductase ResA (173 aa).

The chain crosses the membrane as a helical; Signal-anchor for type II membrane protein span at residues 10–29; sequence VIILLILSGAVGFTLYQGYF. Residues 35-173 form the Thioredoxin domain; it reads MEIGKEAPNF…LEEYLKKITP (139 aa). A disulfide bridge links cysteine 73 with cysteine 76.

It belongs to the thioredoxin family. ResA subfamily.

The protein resides in the cell membrane. The protein operates within protein modification; cytochrome c assembly. Thiol-disulfide oxidoreductase which is required in disulfide reduction during c-type cytochrome synthesis. May accept reducing equivalents from CcdA, leading to breakage of disulfide bonds in apocytochrome c; following this reduction heme can be covalently attached. The polypeptide is Thiol-disulfide oxidoreductase ResA (Bacillus cereus (strain ATCC 10987 / NRS 248)).